Here is a 686-residue protein sequence, read N- to C-terminus: ATP-dependent zinc metalloprotease FTSH 6, chloroplastic (686 aa).

Residues M1–R14 are compositionally biased toward polar residues. Positions M1 to S52 are disordered. The N-terminal 75 residues, M1–R75, are a transit peptide targeting the chloroplast. Over residues T39–S52 the composition is skewed to low complexity. A helical membrane pass occupies residues V164–L184. Residue G261 to T268 participates in ATP binding. H483 serves as a coordination point for Zn(2+). Residue E484 is part of the active site. Zn(2+)-binding residues include H487 and D562.

In the N-terminal section; belongs to the AAA ATPase family. This sequence in the C-terminal section; belongs to the peptidase M41 family. The cofactor is Zn(2+).

It localises to the plastid. The protein resides in the chloroplast thylakoid membrane. Functionally, probable ATP-dependent zinc metallopeptidase. The protein is ATP-dependent zinc metalloprotease FTSH 6, chloroplastic (FTSH6) of Oryza sativa subsp. japonica (Rice).